Reading from the N-terminus, the 255-residue chain is Putative oxidoreductase YtkK (255 aa).

Residue Thr-7–Gly-14 participates in NAD(+) binding.

This sequence belongs to the short-chain dehydrogenases/reductases (SDR) family.

This is Putative oxidoreductase YtkK (ytkK) from Bacillus subtilis (strain 168).